The sequence spans 564 residues: Phenylalanine--tRNA ligase beta subunit (564 aa).

One can recognise a B5 domain in the interval 286-362 (YFQNTLEVSV…IGRGLDSFKP (77 aa)). Mg(2+) contacts are provided by aspartate 340, aspartate 346, glutamate 349, and glutamate 350.

The protein belongs to the phenylalanyl-tRNA synthetase beta subunit family. Type 2 subfamily. As to quaternary structure, tetramer of two alpha and two beta subunits. Mg(2+) serves as cofactor.

It localises to the cytoplasm. The enzyme catalyses tRNA(Phe) + L-phenylalanine + ATP = L-phenylalanyl-tRNA(Phe) + AMP + diphosphate + H(+). This chain is Phenylalanine--tRNA ligase beta subunit, found in Borrelia hermsii (strain HS1 / DAH).